Reading from the N-terminus, the 157-residue chain is Glutathione peroxidase (157 aa).

Cysteine 35 is an active-site residue.

The protein belongs to the glutathione peroxidase family.

The catalysed reaction is 2 glutathione + H2O2 = glutathione disulfide + 2 H2O. The sequence is that of Glutathione peroxidase (gpo) from Lactococcus lactis subsp. cremoris (strain MG1363).